We begin with the raw amino-acid sequence, 361 residues long: Flagellar P-ring protein (361 aa).

A signal peptide spans methionine 1 to alanine 18.

This sequence belongs to the FlgI family. In terms of assembly, the basal body constitutes a major portion of the flagellar organelle and consists of four rings (L,P,S, and M) mounted on a central rod.

It is found in the periplasm. The protein localises to the bacterial flagellum basal body. Its function is as follows. Assembles around the rod to form the L-ring and probably protects the motor/basal body from shearing forces during rotation. The chain is Flagellar P-ring protein from Vibrio cholerae serotype O1 (strain ATCC 39541 / Classical Ogawa 395 / O395).